Reading from the N-terminus, the 182-residue chain is Orotate phosphoribosyltransferase (182 aa).

Residues Arg-91, Lys-92, Lys-95, His-97, and 117-125 each bind 5-phospho-alpha-D-ribose 1-diphosphate; that span reads EDVTTTGGS. Orotate contacts are provided by Thr-121 and Arg-149.

The protein belongs to the purine/pyrimidine phosphoribosyltransferase family. PyrE subfamily. Homodimer. Mg(2+) serves as cofactor.

The enzyme catalyses orotidine 5'-phosphate + diphosphate = orotate + 5-phospho-alpha-D-ribose 1-diphosphate. It functions in the pathway pyrimidine metabolism; UMP biosynthesis via de novo pathway; UMP from orotate: step 1/2. In terms of biological role, catalyzes the transfer of a ribosyl phosphate group from 5-phosphoribose 1-diphosphate to orotate, leading to the formation of orotidine monophosphate (OMP). The chain is Orotate phosphoribosyltransferase from Pyrococcus furiosus (strain ATCC 43587 / DSM 3638 / JCM 8422 / Vc1).